A 178-amino-acid polypeptide reads, in one-letter code: tRNA (cytidine(56)-2'-O)-methyltransferase (178 aa).

S-adenosyl-L-methionine is bound by residues Leu-84, 112–116 (GAEKV), and 130–137 (VGNQPHSE).

The protein belongs to the aTrm56 family. As to quaternary structure, homodimer.

It localises to the cytoplasm. It carries out the reaction cytidine(56) in tRNA + S-adenosyl-L-methionine = 2'-O-methylcytidine(56) in tRNA + S-adenosyl-L-homocysteine + H(+). Specifically catalyzes the AdoMet-dependent 2'-O-ribose methylation of cytidine at position 56 in tRNAs. This chain is tRNA (cytidine(56)-2'-O)-methyltransferase, found in Methanocella arvoryzae (strain DSM 22066 / NBRC 105507 / MRE50).